Reading from the N-terminus, the 98-residue chain is NADH-ubiquinone oxidoreductase chain 4L (98 aa).

3 helical membrane passes run 1-21 (MPVV…GLLI), 29-49 (SLLC…VTVL), and 61-81 (IILL…LVMV).

It belongs to the complex I subunit 4L family. Core subunit of respiratory chain NADH dehydrogenase (Complex I) which is composed of 45 different subunits.

The protein resides in the mitochondrion inner membrane. The catalysed reaction is a ubiquinone + NADH + 5 H(+)(in) = a ubiquinol + NAD(+) + 4 H(+)(out). Core subunit of the mitochondrial membrane respiratory chain NADH dehydrogenase (Complex I) which catalyzes electron transfer from NADH through the respiratory chain, using ubiquinone as an electron acceptor. Part of the enzyme membrane arm which is embedded in the lipid bilayer and involved in proton translocation. The polypeptide is NADH-ubiquinone oxidoreductase chain 4L (MT-ND4L) (Ursus maritimus (Polar bear)).